The following is a 1859-amino-acid chain: Retinitis pigmentosa 1-like 1 protein (1859 aa).

2 disordered regions span residues 1 to 22 (MNST…PSHR) and 115 to 154 (RKPP…YSWK). In terms of domain architecture, Doublecortin 1 spans 42-126 (KKITFLKRGD…PPKTSREPGR (85 aa)). Residues 115-126 (RKPPKTSREPGR) show a composition bias toward basic and acidic residues. Polar residues predominate over residues 130–139 (KSPSAGQAQV). Residues 160-239 (RRLTLVKNGD…NEAFRCLEME (80 aa)) form the Doublecortin 2 domain. Disordered regions lie at residues 263–301 (PNAK…SGHR), 426–445 (IWRN…RRRW), 457–593 (WRQE…TQSH), 700–750 (MPQE…TSKA), 868–920 (CFGR…TPSA), 952–997 (NTEV…GVLS), 1152–1211 (TEDF…YPEL), 1227–1255 (ATGG…STML), 1298–1350 (GSQD…RVRE), and 1567–1859 (LQSK…DLDF). Positions 457-472 (WRQEANHRKGHDKDNL) are enriched in basic and acidic residues. 2 stretches are compositionally biased toward polar residues: residues 499–512 (GSDT…ASSH) and 535–551 (PETQ…SVSA). The span at 716–728 (SPSNSPSAGNQAS) shows a compositional bias: low complexity. Residues 734 to 750 (PFSSSLDLQEPQATSKA) show a composition bias toward polar residues. Positions 870-883 (GRESASNGSTSSGH) are enriched in low complexity. 3 stretches are compositionally biased toward polar residues: residues 1241–1252 (TWGNAPEQSVHS), 1336–1345 (ESPQHFSESN), and 1567–1577 (LQSKKGGSSNR). The span at 1616–1632 (GEGKQRLRAEEDPEILK) shows a compositional bias: basic and acidic residues. Over residues 1641–1652 (PEEDEATEEDGE) the composition is skewed to acidic residues. The segment covering 1700 to 1720 (EASRERQQEVEGRHQDVKEDS) has biased composition (basic and acidic residues). Residues 1756-1778 (SHHTACSSRALSLDNSSQVSQKG) are compositionally biased toward polar residues.

As to quaternary structure, interacts with RP1; has a synergistic effect with RP1 in photoreceptor differentiation. In terms of tissue distribution, retinal-specific; expressed in photoreceptor.

It is found in the cytoplasm. The protein resides in the cytoskeleton. The protein localises to the cilium axoneme. It localises to the cell projection. Its subcellular location is the cilium. It is found in the photoreceptor outer segment. Functionally, required for the differentiation of photoreceptor cells. Plays a role in the organization of outer segment of rod and cone photoreceptors. This is Retinitis pigmentosa 1-like 1 protein (Rp1l1) from Mus musculus (Mouse).